We begin with the raw amino-acid sequence, 239 residues long: MKKTTLLHEGKAKKVFLTDEADLVIQEFKDDATAFNNKKKGTIAEKGVVNNAISCKLFTMLEGEGVRTHLVEKLSDRDMLCKKLDIIKVEVVVRNIAAGSLVKRYGFTEGSVLREPIVEFYLKNDDLDDPLMNESHAVALGVASLDELAVLGTRALRVNEVLKPFFAGVKLKLVDFKLEFGRHHGEILLGDEISPDTCRFWDLETNEKLDKDRFRLDLGGIEDAYSEVQKRVLGSGALS.

The protein belongs to the SAICAR synthetase family.

It catalyses the reaction 5-amino-1-(5-phospho-D-ribosyl)imidazole-4-carboxylate + L-aspartate + ATP = (2S)-2-[5-amino-1-(5-phospho-beta-D-ribosyl)imidazole-4-carboxamido]succinate + ADP + phosphate + 2 H(+). The protein operates within purine metabolism; IMP biosynthesis via de novo pathway; 5-amino-1-(5-phospho-D-ribosyl)imidazole-4-carboxamide from 5-amino-1-(5-phospho-D-ribosyl)imidazole-4-carboxylate: step 1/2. The polypeptide is Phosphoribosylaminoimidazole-succinocarboxamide synthase (Chlorobium luteolum (strain DSM 273 / BCRC 81028 / 2530) (Pelodictyon luteolum)).